The chain runs to 500 residues: Phenylalanine--tRNA ligase alpha subunit (500 aa).

L-phenylalanine contacts are provided by residues Thr-343, 382–384 (QVD), and Phe-423. Glu-425 is a binding site for Mg(2+). Residue Phe-448 participates in L-phenylalanine binding.

It belongs to the class-II aminoacyl-tRNA synthetase family. Phe-tRNA synthetase alpha subunit type 2 subfamily. Tetramer of two alpha and two beta subunits. Mg(2+) is required as a cofactor.

It localises to the cytoplasm. It carries out the reaction tRNA(Phe) + L-phenylalanine + ATP = L-phenylalanyl-tRNA(Phe) + AMP + diphosphate + H(+). This chain is Phenylalanine--tRNA ligase alpha subunit, found in Thermococcus onnurineus (strain NA1).